We begin with the raw amino-acid sequence, 76 residues long: Conopeptide X11.1 (76 aa).

Positions 1-20 (MMKLSVSFLLLLMLLPFITG) are cleaved as a signal peptide. The propeptide occupies 21–39 (EENSDSDVLKSGAAVRQGR). 4 cysteine pairs are disulfide-bonded: C42-C56, C49-C61, C55-C66, and C60-C73.

In terms of tissue distribution, expressed by the venom duct.

It localises to the secreted. Its function is as follows. Antimicrobial peptide that potently inhibits growth of Mycobacterium tuberculosis (H37Rv strain) (MIC=3 uM). In Conasprella ximenes (Interrupted cone), this protein is Conopeptide X11.1.